The sequence spans 116 residues: Putative pterin-4-alpha-carbinolamine dehydratase (116 aa).

This sequence belongs to the pterin-4-alpha-carbinolamine dehydratase family.

It catalyses the reaction (4aS,6R)-4a-hydroxy-L-erythro-5,6,7,8-tetrahydrobiopterin = (6R)-L-erythro-6,7-dihydrobiopterin + H2O. The polypeptide is Putative pterin-4-alpha-carbinolamine dehydratase (Stenotrophomonas maltophilia (strain R551-3)).